Reading from the N-terminus, the 273-residue chain is MVDISMADVRLLRERLGVGVMDSRNALIEAGGDIERAVEILRLKGLKSAEKREGRSVSEGLVVSRQFATHAVLAELCCETDFVAKSDRFLALSEKVADLVSDADSLETALRVRCDEGSVADLIALEAAVLGENVALRRFARVEGSRFSVYMHRTSSDLPPQVGVILAYEGHDDATARFIAQHIAFAAPEYLSVGDIPQGILQRERDLLTEISRGEGKPEEVLPQIVEGRLVKLYKQNVLLEQDYVRDNKVTISKVLEATGLRVISFARFRVGT.

Residues 80–83 (TDFV) form an involved in Mg(2+) ion dislocation from EF-Tu region.

The protein belongs to the EF-Ts family.

The protein localises to the cytoplasm. In terms of biological role, associates with the EF-Tu.GDP complex and induces the exchange of GDP to GTP. It remains bound to the aminoacyl-tRNA.EF-Tu.GTP complex up to the GTP hydrolysis stage on the ribosome. This chain is Elongation factor Ts, found in Tropheryma whipplei (strain Twist) (Whipple's bacillus).